A 449-amino-acid chain; its full sequence is Tubulin alpha chain (449 aa).

The short motif at 1–4 (MREC) is the MREC motif element. Gln11 provides a ligand contact to GTP. Lys40 is subject to N6-acetyllysine. GTP is bound by residues Glu71, Ser140, Gly144, Thr145, Thr179, Asn206, and Asn228. Glu71 contributes to the Mg(2+) binding site. Residue Glu254 is part of the active site. The disordered stretch occupies residues 430–449 (KDYEEVGADSADAEDEGEEY). Over residues 431 to 449 (DYEEVGADSADAEDEGEEY) the composition is skewed to acidic residues.

Belongs to the tubulin family. Dimer of alpha and beta chains. A typical microtubule is a hollow water-filled tube with an outer diameter of 25 nm and an inner diameter of 15 nM. Alpha-beta heterodimers associate head-to-tail to form protofilaments running lengthwise along the microtubule wall with the beta-tubulin subunit facing the microtubule plus end conferring a structural polarity. Microtubules usually have 13 protofilaments but different protofilament numbers can be found in some organisms and specialized cells. Requires Mg(2+) as cofactor. Some glutamate residues at the C-terminus are polyglycylated, resulting in polyglycine chains on the gamma-carboxyl group. Glycylation is mainly limited to tubulin incorporated into axonemes (cilia and flagella) whereas glutamylation is prevalent in neuronal cells, centrioles, axonemes, and the mitotic spindle. Both modifications can coexist on the same protein on adjacent residues, and lowering polyglycylation levels increases polyglutamylation, and reciprocally. The precise function of polyglycylation is still unclear. Post-translationally, some glutamate residues at the C-terminus are polyglutamylated, resulting in polyglutamate chains on the gamma-carboxyl group. Polyglutamylation plays a key role in microtubule severing by spastin (SPAST). SPAST preferentially recognizes and acts on microtubules decorated with short polyglutamate tails: severing activity by SPAST increases as the number of glutamates per tubulin rises from one to eight, but decreases beyond this glutamylation threshold. In terms of processing, acetylation of alpha chains at Lys-40 is located inside the microtubule lumen. This modification has been correlated with increased microtubule stability, intracellular transport and ciliary assembly. Undergoes a tyrosination/detyrosination cycle, the cyclic removal and re-addition of a C-terminal tyrosine residue by the enzymes tubulin tyrosine carboxypeptidase (MATCAP1, VASH1 or VASH2) and tubulin tyrosine ligase (TTL), respectively. Post-translationally, tyrosination promotes microtubule interaction with CAP-Gly microtubule plus-end tracking proteins. Tyrosinated tubulins regulate the initiation of dynein-driven motility. In terms of processing, detyrosination is involved in metaphase plate congression by guiding chromosomes during mitosis. Detyrosination increases microtubules-dependent mechanotransduction in dystrophic cardiac and skeletal muscle. In cardiomyocytes, detyrosinated microtubules are required to resist to contractile compression during contraction.

It localises to the cytoplasm. It is found in the cytoskeleton. It carries out the reaction GTP + H2O = GDP + phosphate + H(+). Functionally, tubulin is the major constituent of microtubules, a cylinder consisting of laterally associated linear protofilaments composed of alpha- and beta-tubulin heterodimers. Microtubules grow by the addition of GTP-tubulin dimers to the microtubule end, where a stabilizing cap forms. Below the cap, tubulin dimers are in GDP-bound state, owing to GTPase activity of alpha-tubulin. This chain is Tubulin alpha chain (tuba), found in Xenopus laevis (African clawed frog).